We begin with the raw amino-acid sequence, 270 residues long: Interleukin-1 beta (270 aa).

A propeptide spanning residues M1–D118 is cleaved from the precursor.

Belongs to the IL-1 family. Monomer. In its precursor form, weakly interacts with full-length MEFV; the mature cytokine does not interact at all. Interacts with integrins ITGAV:ITGBV and ITGA5:ITGB1; integrin-binding is required for IL1B signaling. Interacts with cargo receptor TMED10; the interaction is direct and is required for the secretion of IL1B mature form. Interacts with HSP90AB1; the interaction facilitates cargo translocation into the ERGIC. Interacts with HSP90B1; the interaction facilitates cargo translocation into the ERGIC.

The protein resides in the cytoplasm. Its subcellular location is the cytosol. The protein localises to the secreted. It localises to the lysosome. It is found in the extracellular exosome. Its function is as follows. Potent pro-inflammatory cytokine. Initially discovered as the major endogenous pyrogen, induces prostaglandin synthesis, neutrophil influx and activation, T-cell activation and cytokine production, B-cell activation and antibody production, and fibroblast proliferation and collagen production. Promotes Th17 differentiation of T-cells. Synergizes with IL12/interleukin-12 to induce IFNG synthesis from T-helper 1 (Th1) cells. Plays a role in angiogenesis by inducing VEGF production synergistically with TNF and IL6. Involved in transduction of inflammation downstream of pyroptosis: its mature form is specifically released in the extracellular milieu by passing through the gasdermin-D (GSDMD) pore. This chain is Interleukin-1 beta (IL1B), found in Phoca vitulina richardii (Pacific harbor seal).